Reading from the N-terminus, the 256-residue chain is uncharacterized protein (256 aa).

The N-terminal stretch at 1 to 22 (MGYLKRIGMCISLLIVIIFVTS) is a signal peptide. A lipid anchor (N-palmitoyl cysteine) is attached at Cys-23. The S-diacylglycerol cysteine moiety is linked to residue Cys-23.

This sequence belongs to the staphylococcal tandem lipoprotein family.

Its subcellular location is the cell membrane. This is an uncharacterized protein from Staphylococcus aureus (strain MRSA252).